Consider the following 75-residue polypeptide: Small ribosomal subunit protein bS21A (75 aa).

This sequence belongs to the bacterial ribosomal protein bS21 family.

The polypeptide is Small ribosomal subunit protein bS21A (rpsU1) (Agrobacterium fabrum (strain C58 / ATCC 33970) (Agrobacterium tumefaciens (strain C58))).